Here is a 942-residue protein sequence, read N- to C-terminus: Chitin synthase 2 (942 aa).

A compositionally biased stretch (basic and acidic residues) spans 1 to 13 (MAYHYSHDSDRRQ). The tract at residues 1-132 (MAYHYSHDSD…PSHTDYSDED (132 aa)) is disordered. The span at 18-33 (YNYPSNYSNPSQYSIP) shows a compositional bias: low complexity. A glycan (N-linked (GlcNAc...) asparagine) is linked at asparagine 23. Residues 71–80 (PQPTASSMTS) show a composition bias toward polar residues. The N-linked (GlcNAc...) asparagine glycan is linked to asparagine 587. A run of 4 helical transmembrane segments spans residues 590 to 610 (IFAA…GHGI), 625 to 645 (FNLL…FFLI), 663 to 683 (IFQV…VCSL), and 696 to 716 (FCIF…GWTV). N-linked (GlcNAc...) asparagine glycosylation occurs at asparagine 736. 2 helical membrane passes run 739-759 (FVQL…SSLL) and 770-790 (FVQY…YAMC). Asparagine 803 carries N-linked (GlcNAc...) asparagine glycosylation. The next 2 helical transmembrane spans lie at 873–893 (VVLL…SSTF) and 916–936 (IFYA…LYLI).

It belongs to the chitin synthase family. Class III subfamily.

The protein localises to the cell membrane. The enzyme catalyses [(1-&gt;4)-N-acetyl-beta-D-glucosaminyl](n) + UDP-N-acetyl-alpha-D-glucosamine = [(1-&gt;4)-N-acetyl-beta-D-glucosaminyl](n+1) + UDP + H(+). In terms of biological role, polymerizes chitin, a structural polymer of the cell wall and septum, by transferring the sugar moiety of UDP-GlcNAc to the non-reducing end of the growing chitin polymer. This Cryptococcus neoformans var. grubii serotype A (strain H99 / ATCC 208821 / CBS 10515 / FGSC 9487) (Filobasidiella neoformans var. grubii) protein is Chitin synthase 2.